The chain runs to 492 residues: NADPH:adrenodoxin oxidoreductase, mitochondrial (492 aa).

Residues 1 to 32 constitute a mitochondrion transit peptide; it reads MAPRCWRWWPWSSWTRTRLPPSRSIQNFGQHF. 4 residues coordinate FAD: Ala49, Glu70, Leu78, and Val114. Residues 185-188, 229-230, and Glu241 contribute to the NADP(+) site; these read QGNV and RR. Phosphoserine occurs at positions 311 and 318. Residues Trp399 and 406-408 each bind FAD; that span reads GVI. Gly406 is a binding site for NADP(+).

It belongs to the ferredoxin--NADP reductase type 1 family. Monomer. Interacts directly with FDX1. FAD serves as cofactor. Detected in adrenal cortex and corpus luteum (at protein level).

It localises to the mitochondrion inner membrane. The enzyme catalyses 2 reduced [adrenodoxin] + NADP(+) + H(+) = 2 oxidized [adrenodoxin] + NADPH. It catalyses the reaction 2 reduced [2Fe-2S]-[ferredoxin] + NADP(+) + H(+) = 2 oxidized [2Fe-2S]-[ferredoxin] + NADPH. Its pathway is steroid metabolism; cholesterol metabolism. Functionally, serves as the first electron transfer protein in all the mitochondrial P450 systems including cholesterol side chain cleavage in all steroidogenic tissues, steroid 11-beta hydroxylation in the adrenal cortex, 25-OH-vitamin D3-24 hydroxylation in the kidney, and sterol C-27 hydroxylation in the liver. Also acts as a ferredoxin--NADP(+) reductase essential for coenzyme Q biosynthesis: together with FDX2, transfers the electrons required for the hydroxylation reaction performed by COQ6. This is NADPH:adrenodoxin oxidoreductase, mitochondrial (FDXR) from Bos taurus (Bovine).